A 354-amino-acid chain; its full sequence is DNA integrity scanning protein DisA (354 aa).

Positions 6–144 constitute a DAC domain; that stretch reads GMKIKDTLKI…GDIKYVLRDS (139 aa). ATP-binding positions include G73, L91, and 104–108; that span reads TRHRT.

It belongs to the DisA family. As to quaternary structure, homooctamer. Mg(2+) serves as cofactor.

It carries out the reaction 2 ATP = 3',3'-c-di-AMP + 2 diphosphate. In terms of biological role, participates in a DNA-damage check-point that is active prior to asymmetric division when DNA is damaged. DisA forms globular foci that rapidly scan along the chromosomes during sporulation, searching for lesions. When a lesion is present, DisA pauses at the lesion site. This triggers a cellular response that culminates in a temporary block in sporulation initiation. Also has diadenylate cyclase activity, catalyzing the condensation of 2 ATP molecules into cyclic di-AMP (c-di-AMP). c-di-AMP acts as a signaling molecule that couples DNA integrity with progression of sporulation. The rise in c-di-AMP level generated by DisA while scanning the chromosome, operates as a positive signal that advances sporulation; upon encountering a lesion, the DisA focus arrests at the damaged site and halts c-di-AMP synthesis. The chain is DNA integrity scanning protein DisA from Clostridium botulinum (strain Eklund 17B / Type B).